The following is a 154-amino-acid chain: Protein phosphatase 1 regulatory subunit 27 (154 aa).

2 ANK repeats span residues 63–92 and 96–125; these read SGLAALHEAVLSGNLECVKLLVKYGADIHQ and TGWTPLHIACSDGYPDIARYLISLGADRDA.

Interacts with DYSF and PPP1CA.

Inhibits phosphatase activity of protein phosphatase 1 (PP1) complexes. The polypeptide is Protein phosphatase 1 regulatory subunit 27 (Ppp1r27) (Mus musculus (Mouse)).